We begin with the raw amino-acid sequence, 715 residues long: Polyribonucleotide nucleotidyltransferase (715 aa).

D495 and D501 together coordinate Mg(2+). The KH domain maps to 562-621 (PRLLTLQIPPDMIGLVIGPGGKTVRGISEQYNVKVDISEEGLVTITAPNETNAKQARAAI). The 69-residue stretch at 631-699 (GDVYLGRVTR…SKGRINLTRL (69 aa)) folds into the S1 motif domain.

It belongs to the polyribonucleotide nucleotidyltransferase family. Mg(2+) is required as a cofactor.

It is found in the cytoplasm. The catalysed reaction is RNA(n+1) + phosphate = RNA(n) + a ribonucleoside 5'-diphosphate. Involved in mRNA degradation. Catalyzes the phosphorolysis of single-stranded polyribonucleotides processively in the 3'- to 5'-direction. This chain is Polyribonucleotide nucleotidyltransferase, found in Thermosynechococcus vestitus (strain NIES-2133 / IAM M-273 / BP-1).